A 229-amino-acid polypeptide reads, in one-letter code: Potassium/proton antiporter CemA (229 aa).

Transmembrane regions (helical) follow at residues 7–27 (FTPL…SLSF), 114–134 (IICF…LVIL), and 189–209 (ILSG…KFWI).

The protein belongs to the CemA family.

It is found in the plastid. The protein localises to the chloroplast inner membrane. The catalysed reaction is K(+)(in) + H(+)(out) = K(+)(out) + H(+)(in). Its function is as follows. Contributes to K(+)/H(+) antiport activity by supporting proton efflux to control proton extrusion and homeostasis in chloroplasts in a light-dependent manner to modulate photosynthesis. Prevents excessive induction of non-photochemical quenching (NPQ) under continuous-light conditions. Indirectly promotes efficient inorganic carbon uptake into chloroplasts. The sequence is that of Potassium/proton antiporter CemA from Panax ginseng (Korean ginseng).